The primary structure comprises 101 residues: Small ribosomal subunit protein uS14 (101 aa).

Residues 1–11 (MAKKSSVEKNN) show a composition bias toward basic and acidic residues. The segment at 1-22 (MAKKSSVEKNNRRQRMVKNAAA) is disordered. The span at 12-22 (RRQRMVKNAAA) shows a compositional bias: basic residues.

It belongs to the universal ribosomal protein uS14 family. In terms of assembly, part of the 30S ribosomal subunit. Contacts proteins S3 and S10.

Its function is as follows. Binds 16S rRNA, required for the assembly of 30S particles and may also be responsible for determining the conformation of the 16S rRNA at the A site. This chain is Small ribosomal subunit protein uS14, found in Afipia carboxidovorans (strain ATCC 49405 / DSM 1227 / KCTC 32145 / OM5) (Oligotropha carboxidovorans).